The sequence spans 456 residues: Cytochrome P450 monooxygenase avaH (456 aa).

A helical transmembrane segment spans residues 243 to 263 (LMSYFVSVFLVNVALFNAVSI). C403 is a binding site for heme.

This sequence belongs to the cytochrome P450 family. Requires heme as cofactor.

The protein resides in the membrane. Its pathway is secondary metabolite biosynthesis. In terms of biological role, cytochrome P450 monooxygenase; part of the cluster that mediates the biosynthesis of a highly modified cyclo-arginine-tryptophan dipeptide (cRW). The first step of the pathway is perfornmed by the arginine-containing cyclodipeptide synthase (RCPDS) avaA that acts as the scaffold-generating enzyme and is responsible for formation of the cyclo-Arg-Trp (cRW) diketopiperazine. AvaB then acts as a multifunctional flavoenzyme that is responsible for generating the cyclo-Arg-formylkynurenine DKP, which can be deformylated by avaC. AvaB then further catalyzes an additional N-oxidation followed by cyclization and dehydration. The next step is an N-acetylation of the guanidine group catalyzed by the arginine N-acetyltransferase avaD. The roles of the additional enzymes identified within the ava cluster still have to be determined. The protein is Cytochrome P450 monooxygenase avaH of Aspergillus versicolor.